A 281-amino-acid polypeptide reads, in one-letter code: Pantothenate synthetase (281 aa).

29–36 (MGYLHEGH) provides a ligand contact to ATP. The active-site Proton donor is the histidine 36. Residue glutamine 60 coordinates (R)-pantoate. Glutamine 60 is a beta-alanine binding site. 146 to 149 (GQKD) is a binding site for ATP. A (R)-pantoate-binding site is contributed by glutamine 152. ATP contacts are provided by residues valine 175 and 183–186 (MSSR).

The protein belongs to the pantothenate synthetase family. In terms of assembly, homodimer.

The protein resides in the cytoplasm. The catalysed reaction is (R)-pantoate + beta-alanine + ATP = (R)-pantothenate + AMP + diphosphate + H(+). It functions in the pathway cofactor biosynthesis; (R)-pantothenate biosynthesis; (R)-pantothenate from (R)-pantoate and beta-alanine: step 1/1. Its function is as follows. Catalyzes the condensation of pantoate with beta-alanine in an ATP-dependent reaction via a pantoyl-adenylate intermediate. This Pseudothermotoga lettingae (strain ATCC BAA-301 / DSM 14385 / NBRC 107922 / TMO) (Thermotoga lettingae) protein is Pantothenate synthetase.